A 456-amino-acid chain; its full sequence is Glutamate--tRNA ligase 2 (456 aa).

Positions 8–18 (PSPTGYIHIGN) match the 'HIGH' region motif. Residues 249–253 (GLSKR) carry the 'KMSKS' region motif. Lys252 lines the ATP pocket.

The protein belongs to the class-I aminoacyl-tRNA synthetase family. Glutamate--tRNA ligase type 1 subfamily. In terms of assembly, monomer.

The protein resides in the cytoplasm. The enzyme catalyses tRNA(Glu) + L-glutamate + ATP = L-glutamyl-tRNA(Glu) + AMP + diphosphate. Its function is as follows. Catalyzes the attachment of glutamate to tRNA(Glu) in a two-step reaction: glutamate is first activated by ATP to form Glu-AMP and then transferred to the acceptor end of tRNA(Glu). This is Glutamate--tRNA ligase 2 from Bartonella bacilliformis (strain ATCC 35685 / KC583 / Herrer 020/F12,63).